The sequence spans 240 residues: CRISPR system aCascade subunit Cas5 1 (240 aa).

The protein belongs to the CRISPR-associated protein Cas5 family. Subtype I-A/Apern subfamily. In terms of assembly, part of the aCascade ribonucleoprotein complex, minimally composed of Csa2 and Cas5a, which binds crRNA. Other possible components of aCascade in strain P1 are Cas6b (SSO1437) and Csa5 (SSO1443), while SSO1399, Cas5b (SSO1400) and SSO1401 have sometimes been seen weakly associated. Csa2 is probably the major RNA-binding subunit. The Csa2-Cas5a-crRNA complex also binds target DNA homologous to crRNA, probably forming an R-loop. Purified aCascade forms a filament about 6 nm in width.

Functionally, CRISPR (clustered regularly interspaced short palindromic repeat) is an adaptive immune system that provides protection against mobile genetic elements (viruses, transposable elements and conjugative plasmids). CRISPR clusters contain spacers, sequences complementary to antecedent mobile elements, and target invading nucleic acids. CRISPR clusters are transcribed and processed into CRISPR RNA (crRNA). The protein is CRISPR system aCascade subunit Cas5 1 (cas5a) of Saccharolobus solfataricus (strain ATCC 35092 / DSM 1617 / JCM 11322 / P2) (Sulfolobus solfataricus).